Reading from the N-terminus, the 436-residue chain is GTPase Obg (436 aa).

One can recognise an Obg domain in the interval 2-160 (SMFLDTAKVS…RELALELKIL (159 aa)). The OBG-type G domain occupies 161 to 338 (ADVGLVGFPS…LLDATAQLLA (178 aa)). GTP-binding positions include 167–174 (GFPSVGKS), 192–196 (FTTIV), 214–217 (DLPG), 284–287 (NKMD), and 319–321 (SGI). 2 residues coordinate Mg(2+): S174 and T194. Positions 358–436 (GFEEEEKAFD…IGKFEFEFVD (79 aa)) constitute an OCT domain.

The protein belongs to the TRAFAC class OBG-HflX-like GTPase superfamily. OBG GTPase family. In terms of assembly, monomer. It depends on Mg(2+) as a cofactor.

The protein localises to the cytoplasm. In terms of biological role, an essential GTPase which binds GTP, GDP and possibly (p)ppGpp with moderate affinity, with high nucleotide exchange rates and a fairly low GTP hydrolysis rate. Plays a role in control of the cell cycle, stress response, ribosome biogenesis and in those bacteria that undergo differentiation, in morphogenesis control. This is GTPase Obg from Streptococcus mutans serotype c (strain ATCC 700610 / UA159).